Reading from the N-terminus, the 230-residue chain is 2-C-methyl-D-erythritol 4-phosphate cytidylyltransferase (230 aa).

This sequence belongs to the IspD/TarI cytidylyltransferase family. IspD subfamily.

It carries out the reaction 2-C-methyl-D-erythritol 4-phosphate + CTP + H(+) = 4-CDP-2-C-methyl-D-erythritol + diphosphate. The protein operates within isoprenoid biosynthesis; isopentenyl diphosphate biosynthesis via DXP pathway; isopentenyl diphosphate from 1-deoxy-D-xylulose 5-phosphate: step 2/6. Functionally, catalyzes the formation of 4-diphosphocytidyl-2-C-methyl-D-erythritol from CTP and 2-C-methyl-D-erythritol 4-phosphate (MEP). The protein is 2-C-methyl-D-erythritol 4-phosphate cytidylyltransferase of Shewanella halifaxensis (strain HAW-EB4).